Here is a 273-residue protein sequence, read N- to C-terminus: Ribosomal RNA small subunit methyltransferase A (273 aa).

S-adenosyl-L-methionine is bound by residues N18, L20, G45, E66, D91, and N113.

It belongs to the class I-like SAM-binding methyltransferase superfamily. rRNA adenine N(6)-methyltransferase family. RsmA subfamily.

Its subcellular location is the cytoplasm. The catalysed reaction is adenosine(1518)/adenosine(1519) in 16S rRNA + 4 S-adenosyl-L-methionine = N(6)-dimethyladenosine(1518)/N(6)-dimethyladenosine(1519) in 16S rRNA + 4 S-adenosyl-L-homocysteine + 4 H(+). Its function is as follows. Specifically dimethylates two adjacent adenosines (A1518 and A1519) in the loop of a conserved hairpin near the 3'-end of 16S rRNA in the 30S particle. May play a critical role in biogenesis of 30S subunits. The sequence is that of Ribosomal RNA small subunit methyltransferase A from Salmonella newport (strain SL254).